The chain runs to 37 residues: Large ribosomal subunit protein bL36 (37 aa).

Belongs to the bacterial ribosomal protein bL36 family.

In Helicobacter pylori (strain HPAG1), this protein is Large ribosomal subunit protein bL36.